Here is a 138-residue protein sequence, read N- to C-terminus: Beta-lactamase HcpB (138 aa).

TPR repeat units lie at residues Met-1–Phe-28, Gly-57–Asp-94, and Leu-97–Asp-130. Cystine bridges form between Cys-22/Cys-30, Cys-52/Cys-60, Cys-88/Cys-96, and Cys-124/Cys-132.

This sequence belongs to the hcp beta-lactamase family.

It carries out the reaction a beta-lactam + H2O = a substituted beta-amino acid. Its function is as follows. Hydrolyzes 6-aminopenicillinic acid and 7-aminocephalosporanic acid (ACA) derivatives. This chain is Beta-lactamase HcpB (hcpB), found in Helicobacter pylori (strain ATCC 700392 / 26695) (Campylobacter pylori).